Consider the following 78-residue polypeptide: Protein SlyX homolog (78 aa).

This sequence belongs to the SlyX family.

The protein is Protein SlyX homolog of Xylella fastidiosa (strain M23).